Here is a 220-residue protein sequence, read N- to C-terminus: Iron-sulfur cluster repair protein YtfE (220 aa).

It belongs to the RIC family. YtfE subfamily. Homodimer.

It is found in the cytoplasm. Functionally, di-iron-containing protein involved in the repair of iron-sulfur clusters damaged by oxidative and nitrosative stress conditions. This Escherichia coli O6:K15:H31 (strain 536 / UPEC) protein is Iron-sulfur cluster repair protein YtfE.